A 93-amino-acid chain; its full sequence is Cytochrome c oxidase polypeptide 6, mitochondrial (93 aa).

At 2-33 the chain is on the mitochondrial matrix side; that stretch reads STGNESYNLRYPKGFKGYPYNMYKLEGYGTPK. The chain crosses the membrane as a helical span at residues 34–53; sequence GYITLIGVVATLTVSGLFFA. Topologically, residues 54–93 are mitochondrial intermembrane; it reads KTRSNKREYPTHNKEWRAKTLAYAKETNADPIYQLPKDKI.

This sequence belongs to the cytochrome c oxidase IV family. As to quaternary structure, component of the cytochrome c oxidase (complex IV, CIV), a multisubunit enzyme composed of a catalytic core of 3 subunits and seevral supernumerary subunits. The complex exists as a monomer or a dimer and forms supercomplexes (SCs) in the inner mitochondrial membrane with ubiquinol-cytochrome c oxidoreductase (cytochrome b-c1 complex, complex III, CIII).

It is found in the mitochondrion inner membrane. Its pathway is energy metabolism; oxidative phosphorylation. In terms of biological role, component of the cytochrome c oxidase, the last enzyme in the mitochondrial electron transport chain which drives oxidative phosphorylation. The respiratory chain contains 3 multisubunit complexes succinate dehydrogenase (complex II, CII), ubiquinol-cytochrome c oxidoreductase (cytochrome b-c1 complex, complex III, CIII) and cytochrome c oxidase (complex IV, CIV), that cooperate to transfer electrons derived from NADH and succinate to molecular oxygen, creating an electrochemical gradient over the inner membrane that drives transmembrane transport and the ATP synthase. Cytochrome c oxidase is the component of the respiratory chain that catalyzes the reduction of oxygen to water. Electrons originating from reduced cytochrome c in the intermembrane space (IMS) are transferred via the dinuclear copper A center (CU(A)) of subunit 2 and heme A of subunit 1 to the active site in subunit 1, a binuclear center (BNC) formed by heme A3 and copper B (CU(B)). The BNC reduces molecular oxygen to 2 water molecules using 4 electrons from cytochrome c in the IMS and 4 protons from the mitochondrial matrix. This chain is Cytochrome c oxidase polypeptide 6, mitochondrial (cxfA), found in Dictyostelium discoideum (Social amoeba).